A 310-amino-acid polypeptide reads, in one-letter code: Tagatose-6-phosphate kinase (310 aa).

This sequence belongs to the carbohydrate kinase PfkB family. LacC subfamily.

It catalyses the reaction D-tagatofuranose 6-phosphate + ATP = D-tagatofuranose 1,6-bisphosphate + ADP + H(+). Its pathway is carbohydrate metabolism; D-tagatose 6-phosphate degradation; D-glyceraldehyde 3-phosphate and glycerone phosphate from D-tagatose 6-phosphate: step 1/2. This chain is Tagatose-6-phosphate kinase, found in Staphylococcus epidermidis (strain ATCC 35984 / DSM 28319 / BCRC 17069 / CCUG 31568 / BM 3577 / RP62A).